The following is a 414-amino-acid chain: Putative competence-damage inducible protein (414 aa).

Belongs to the CinA family.

The polypeptide is Putative competence-damage inducible protein (Listeria monocytogenes serotype 4b (strain CLIP80459)).